The sequence spans 82 residues: Antitoxin MazE8 (82 aa).

As to quaternary structure, forms a complex with cognate toxin MazF8.

Antitoxin component of a type II toxin-antitoxin (TA) system. Its cognate toxin is MazF8. In Mycobacterium tuberculosis (strain ATCC 25618 / H37Rv), this protein is Antitoxin MazE8 (mazE8).